We begin with the raw amino-acid sequence, 480 residues long: Adenylosuccinate lyase (480 aa).

Residues R14, Y15, R79, H80, and D81 each contribute to the AMP site. Fumarate is bound at residue H80. Residue H153 is the Proton donor/acceptor of the active site. Q236 contributes to the AMP binding site. A fumarate-binding site is contributed by Q236. Q236 provides a ligand contact to N(6)-(1,2-dicarboxyethyl)-AMP. Residue S284 is the Proton donor/acceptor of the active site. Positions 285, 290, and 292 each coordinate fumarate. Residues S285, K290, and N292 each contribute to the N(6)-(1,2-dicarboxyethyl)-AMP site. Residue R298 participates in AMP binding. Positions 324, 329, and 333 each coordinate N(6)-(1,2-dicarboxyethyl)-AMP. Residues S329 and R333 each contribute to the AMP site.

Belongs to the lyase 1 family. Adenylosuccinate lyase subfamily. In terms of assembly, homotetramer.

The enzyme catalyses N(6)-(1,2-dicarboxyethyl)-AMP = fumarate + AMP. Its pathway is purine metabolism; AMP biosynthesis via salvage pathway. Catalyzes conversion of succinyladenosine monophosphate (SAMP) to AMP and fumarate on the purine salvage pathway. This is Adenylosuccinate lyase from Schistosoma mansoni (Blood fluke).